The primary structure comprises 238 residues: Purine nucleoside phosphorylase DeoD-type (238 aa).

His4 serves as a coordination point for a purine D-ribonucleoside. Phosphate-binding positions include Gly20, Arg24, Arg43, and Arg87–Ser90. A purine D-ribonucleoside-binding positions include Glu179–Glu181 and Ser203–Asp204. Catalysis depends on Asp204, which acts as the Proton donor.

The protein belongs to the PNP/UDP phosphorylase family. In terms of assembly, homohexamer; trimer of homodimers.

It catalyses the reaction a purine D-ribonucleoside + phosphate = a purine nucleobase + alpha-D-ribose 1-phosphate. The enzyme catalyses a purine 2'-deoxy-D-ribonucleoside + phosphate = a purine nucleobase + 2-deoxy-alpha-D-ribose 1-phosphate. Functionally, catalyzes the reversible phosphorolytic breakdown of the N-glycosidic bond in the beta-(deoxy)ribonucleoside molecules, with the formation of the corresponding free purine bases and pentose-1-phosphate. This Actinobacillus succinogenes (strain ATCC 55618 / DSM 22257 / CCUG 43843 / 130Z) protein is Purine nucleoside phosphorylase DeoD-type.